Here is a 364-residue protein sequence, read N- to C-terminus: DNA replication and repair protein RecF (364 aa).

Residue 30–37 (GENGSGKT) coordinates ATP.

Belongs to the RecF family.

It is found in the cytoplasm. The RecF protein is involved in DNA metabolism; it is required for DNA replication and normal SOS inducibility. RecF binds preferentially to single-stranded, linear DNA. It also seems to bind ATP. The protein is DNA replication and repair protein RecF of Xylella fastidiosa (strain M23).